Reading from the N-terminus, the 888-residue chain is Villin-like protein quail (888 aa).

A Gelsolin-like repeat occupies 307–366 (GVYLLDNYGQSIWLWVGGQAPQADALSAMGNGRAFVKKKKYPDNTLVVRVLEGHEPVEFK). In terms of domain architecture, HP spans 823-888 (FDGHKKYPLT…MELKKQFKLF (66 aa)).

It belongs to the villin/gelsolin family. As to expression, germline specific in adult flies.

Functionally, required for the formation of cytoplasmic actin filament bundles in nurse cells, possibly by regulating both the polymerization and organization of actin filaments. Mutations in quail result in female sterility due to the disruption of cytoplasmic transport from the nurse cells into the oocyte late in oogenesis. The protein is Villin-like protein quail (qua) of Drosophila melanogaster (Fruit fly).